The primary structure comprises 286 residues: 4-diphosphocytidyl-2-C-methyl-D-erythritol kinase (286 aa).

The active site involves lysine 11. Proline 94 to serine 104 serves as a coordination point for ATP. Residue aspartate 136 is part of the active site.

Belongs to the GHMP kinase family. IspE subfamily.

The catalysed reaction is 4-CDP-2-C-methyl-D-erythritol + ATP = 4-CDP-2-C-methyl-D-erythritol 2-phosphate + ADP + H(+). Its pathway is isoprenoid biosynthesis; isopentenyl diphosphate biosynthesis via DXP pathway; isopentenyl diphosphate from 1-deoxy-D-xylulose 5-phosphate: step 3/6. In terms of biological role, catalyzes the phosphorylation of the position 2 hydroxy group of 4-diphosphocytidyl-2C-methyl-D-erythritol. This chain is 4-diphosphocytidyl-2-C-methyl-D-erythritol kinase, found in Pseudomonas putida (strain GB-1).